The chain runs to 71 residues: Small ribosomal subunit protein bS21 (71 aa).

A disordered region spans residues 37–71 (HYEKPTAERKRKKAAAVKRHMKKLSRDNARRVKLY). Basic residues predominate over residues 45 to 59 (RKRKKAAAVKRHMKK). Basic and acidic residues predominate over residues 60 to 71 (LSRDNARRVKLY).

The protein belongs to the bacterial ribosomal protein bS21 family.

The protein is Small ribosomal subunit protein bS21 of Pseudoalteromonas translucida (strain TAC 125).